We begin with the raw amino-acid sequence, 204 residues long: Superoxide dismutase [Mn] (204 aa).

H27 contributes to the Mn(2+) binding site. T34 and T70 each carry phosphothreonine. The Mn(2+) site is built by H82, D164, and H168.

The protein belongs to the iron/manganese superoxide dismutase family. As to quaternary structure, homodimer. Mn(2+) is required as a cofactor.

The enzyme catalyses 2 superoxide + 2 H(+) = H2O2 + O2. In terms of biological role, destroys superoxide anion radicals which are normally produced within the cells and which are toxic to biological systems. The chain is Superoxide dismutase [Mn] (sodA) from Geobacillus stearothermophilus (Bacillus stearothermophilus).